The sequence spans 177 residues: Large ribosomal subunit protein uL6 (177 aa).

It belongs to the universal ribosomal protein uL6 family. Part of the 50S ribosomal subunit.

Its function is as follows. This protein binds to the 23S rRNA, and is important in its secondary structure. It is located near the subunit interface in the base of the L7/L12 stalk, and near the tRNA binding site of the peptidyltransferase center. The chain is Large ribosomal subunit protein uL6 from Cupriavidus necator (strain ATCC 17699 / DSM 428 / KCTC 22496 / NCIMB 10442 / H16 / Stanier 337) (Ralstonia eutropha).